A 355-amino-acid polypeptide reads, in one-letter code: Countin-like protein (355 aa).

The first 27 residues, 1–27, serve as a signal peptide directing secretion; the sequence is MNKSLFSLILLIITIFNLASNINIVSA. A disordered region spans residues 63-83; sequence NNHEDNNNNNNNNNNNNNAYN. Residues 69–83 are compositionally biased toward low complexity; that stretch reads NNNNNNNNNNNNAYN. In terms of domain architecture, Saposin B-type spans 93–177; sequence GDIECVVCLD…ELITACSTPK (85 aa). Disulfide bonds link C97/C173, C100/C167, and C128/C140. N132, N209, N242, N253, N254, N282, and N303 each carry an N-linked (GlcNAc...) asparagine glycan. The segment at 290–355 is disordered; sequence ISNPTPTPTP…SSHYKNKINK (66 aa). Positions 301-342 are enriched in low complexity; the sequence is PSNSTTPTPTPTNSTPTPTSTSTPTSTPTSTPTPTPTSSSST. Over residues 345–355 the composition is skewed to basic residues; the sequence is HSSHYKNKINK.

The protein belongs to the countin family.

It is found in the secreted. This is Countin-like protein from Dictyostelium discoideum (Social amoeba).